The following is a 328-amino-acid chain: MPLHHLTRFPRLELIGAPTPLEYLPRLSDYLGREIYIKRDDVTPIAMGGNKLRKLEFLVADALREGADTLITAGAIQSNHVRQTAAVAAKLGLHCVALLENPIGTTAENYLTNGNRLLLDLFNTQIEMCDALTDPDAQLQTLATRIEAQGFRPYVIPVGGSSALGAMGYVESALEIVQQCEEVVGLSSVVVASGSAGTHAGLAVGLEHLMPDVELIGVTVSRSVAEQKPKVIALQQAIAGQLALTATADIHLWDDYFAPGYGVPNDAGMEAVKLLANLEGVLLDPVYTGKAMAGLIDGISQKRFNDDGPILFIHTGGAPALFAYHPHV.

Lys-51 bears the N6-(pyridoxal phosphate)lysine mark.

The protein belongs to the ACC deaminase/D-cysteine desulfhydrase family. In terms of assembly, homodimer. It depends on pyridoxal 5'-phosphate as a cofactor.

It carries out the reaction D-cysteine + H2O = hydrogen sulfide + pyruvate + NH4(+) + H(+). Its function is as follows. Catalyzes the alpha,beta-elimination reaction of D-cysteine and of several D-cysteine derivatives. It could be a defense mechanism against D-cysteine. This is D-cysteine desulfhydrase from Salmonella typhi.